A 460-amino-acid polypeptide reads, in one-letter code: UDP-glycosyltransferase 91C1 (460 aa).

UDP-alpha-D-glucose-binding positions include Thr283, 335–337 (VPQ), 352–360 (HCGWNSVVE), and 374–377 (LNEQ).

Belongs to the UDP-glycosyltransferase family.

The polypeptide is UDP-glycosyltransferase 91C1 (UGT91C1) (Arabidopsis thaliana (Mouse-ear cress)).